The chain runs to 324 residues: PGR5-like protein 1A, chloroplastic (324 aa).

The N-terminal 60 residues, 1 to 60, are a transit peptide targeting the chloroplast; it reads MGSKMLFSLTSPRLFSAVSRKPSSSFSPSPPSPSSRTQWTQLSPGKSISLRRRVFLLPAK. Residues 16–42 form a disordered region; sequence SAVSRKPSSSFSPSPPSPSSRTQWTQL. Over 61-198 the chain is Stromal; it reads ATTEQSGPVG…KVYSDLAVDY (138 aa). Cys82 and Cys183 are disulfide-bonded. The helical transmembrane segment at 199 to 219 threads the bilayer; the sequence is FKMLLLNVPATVVALGLFFFL. Topologically, residues 220 to 236 are lumenal, thylakoid; that stretch reads DDITGFEITYIMELPEP. The helical transmembrane segment at 237–257 threads the bilayer; the sequence is YSFIFTWFAAVPVIVYLALSI. The Stromal segment spans residues 258–324; it reads TKLIIKDFLI…LITLPEGSQA (67 aa).

It belongs to the PGR5 family. Homodimer and heterodimer with PGR5. Interacts with PGR5, FD2, petC, psaD1, LFNR1 and LFNR2. Also interacts with a Fe-containing cofactor (FCC). Disulfide bonds; Cys-300 and Cys-303 are probably involved in the formation of disulfide bridges with 'Cys-11' and 'Cys-105' of PGR5 while Cys-272 and Cys-275 are probably involved in the binding of a Fe-containing cofactor (FCC).

Its subcellular location is the plastid. The protein localises to the chloroplast thylakoid membrane. With respect to regulation, inhibited by antimycin A. Functionally, ferredoxin-plastoquinone reductase involved in cyclic electron flow (CEF) around photosystem I. The homodimer is probably not involved in CEF. The polypeptide is PGR5-like protein 1A, chloroplastic (PGRL1A) (Arabidopsis thaliana (Mouse-ear cress)).